We begin with the raw amino-acid sequence, 187 residues long: Large ribosomal subunit protein uL10 (187 aa).

This sequence belongs to the universal ribosomal protein uL10 family. Part of the ribosomal stalk of the 50S ribosomal subunit. The N-terminus interacts with L11 and the large rRNA to form the base of the stalk. The C-terminus forms an elongated spine to which L12 dimers bind in a sequential fashion forming a multimeric L10(L12)X complex.

In terms of biological role, forms part of the ribosomal stalk, playing a central role in the interaction of the ribosome with GTP-bound translation factors. In Synechococcus sp. (strain JA-2-3B'a(2-13)) (Cyanobacteria bacterium Yellowstone B-Prime), this protein is Large ribosomal subunit protein uL10.